We begin with the raw amino-acid sequence, 262 residues long: Small ribosomal subunit protein uS2 (262 aa).

Positions 236–262 are disordered; it reads AGGAAEAPAAEDVQTEEAAAPEADSAE.

This sequence belongs to the universal ribosomal protein uS2 family.

The polypeptide is Small ribosomal subunit protein uS2 (Psychrobacter sp. (strain PRwf-1)).